Consider the following 217-residue polypeptide: Glycosylphosphatidylinositol anchor biosynthesis protein 11 (217 aa).

6 consecutive transmembrane segments (helical) span residues 45 to 61 (TWQTIPFHLIVLSYWFI), 74 to 94 (WLLVPCQVLYLALQFNPATVY), 111 to 131 (VTCILLTIPCMLLVVLFGAPF), 138 to 158 (TWLLSLHCCVLSYPAVYSVLN), 169 to 189 (YFISIAVGCWISCLAIPLDWD), and 195 to 215 (WPIPLVVGAQLGAMFGYTFCS).

It belongs to the PIGF family.

Its subcellular location is the endoplasmic reticulum membrane. It participates in glycolipid biosynthesis; glycosylphosphatidylinositol-anchor biosynthesis. Acts in the GPI biosynthetic pathway between GlcNAc-PI synthesis and GPI transfer to protein. This chain is Glycosylphosphatidylinositol anchor biosynthesis protein 11 (GPI11), found in Eremothecium gossypii (strain ATCC 10895 / CBS 109.51 / FGSC 9923 / NRRL Y-1056) (Yeast).